Consider the following 213-residue polypeptide: Na(+)-translocating NADH-quinone reductase subunit D (213 aa).

A run of 6 helical transmembrane segments spans residues 22 to 42 (LIAI…TTAL), 43 to 63 (TMGF…SLLR), 77 to 97 (IIIS…FFTI), 101 to 121 (LSVF…AESM), 131 to 151 (FLDG…ISII), and 183 to 203 (LGLM…IWIV).

Belongs to the NqrDE/RnfAE family. In terms of assembly, composed of six subunits; NqrA, NqrB, NqrC, NqrD, NqrE and NqrF.

It localises to the cell inner membrane. The catalysed reaction is a ubiquinone + n Na(+)(in) + NADH + H(+) = a ubiquinol + n Na(+)(out) + NAD(+). Its function is as follows. NQR complex catalyzes the reduction of ubiquinone-1 to ubiquinol by two successive reactions, coupled with the transport of Na(+) ions from the cytoplasm to the periplasm. NqrA to NqrE are probably involved in the second step, the conversion of ubisemiquinone to ubiquinol. The sequence is that of Na(+)-translocating NADH-quinone reductase subunit D from Chlamydia trachomatis serovar L2 (strain ATCC VR-902B / DSM 19102 / 434/Bu).